A 450-amino-acid polypeptide reads, in one-letter code: 3-phosphoshikimate 1-carboxyvinyltransferase (450 aa).

Residues 1 to 23 form a disordered region; the sequence is MSSHGAPIPMTSSACGPLTGEAR. K28, S29, and R33 together coordinate 3-phosphoshikimate. K28 provides a ligand contact to phosphoenolpyruvate. Phosphoenolpyruvate contacts are provided by G101 and R129. 3-phosphoshikimate-binding residues include S174, Q176, D327, and K354. A phosphoenolpyruvate-binding site is contributed by Q176. D327 (proton acceptor) is an active-site residue. 2 residues coordinate phosphoenolpyruvate: R358 and R403.

It belongs to the EPSP synthase family. Monomer.

It localises to the cytoplasm. It carries out the reaction 3-phosphoshikimate + phosphoenolpyruvate = 5-O-(1-carboxyvinyl)-3-phosphoshikimate + phosphate. It functions in the pathway metabolic intermediate biosynthesis; chorismate biosynthesis; chorismate from D-erythrose 4-phosphate and phosphoenolpyruvate: step 6/7. Its function is as follows. Catalyzes the transfer of the enolpyruvyl moiety of phosphoenolpyruvate (PEP) to the 5-hydroxyl of shikimate-3-phosphate (S3P) to produce enolpyruvyl shikimate-3-phosphate and inorganic phosphate. This is 3-phosphoshikimate 1-carboxyvinyltransferase from Roseobacter denitrificans (strain ATCC 33942 / OCh 114) (Erythrobacter sp. (strain OCh 114)).